A 129-amino-acid chain; its full sequence is Small ribosomal subunit protein uS11 (129 aa).

This sequence belongs to the universal ribosomal protein uS11 family. Part of the 30S ribosomal subunit. Interacts with proteins S7 and S18. Binds to IF-3.

Located on the platform of the 30S subunit, it bridges several disparate RNA helices of the 16S rRNA. Forms part of the Shine-Dalgarno cleft in the 70S ribosome. This Bacillus cereus (strain G9842) protein is Small ribosomal subunit protein uS11.